A 180-amino-acid polypeptide reads, in one-letter code: Cell division protein SepF (180 aa).

Residues 14-81 (NSEDDEEFDN…SKITPISKSS (68 aa)) are disordered. Positions 15 to 35 (SEDDEEFDNEDYYLDDEEEEE) are enriched in acidic residues. The segment covering 57 to 68 (TRRDTTPKEKPV) has biased composition (basic and acidic residues). Low complexity predominate over residues 69–79 (KTTSKITPISK).

This sequence belongs to the SepF family. Homodimer. Interacts with FtsZ.

It localises to the cytoplasm. In terms of biological role, cell division protein that is part of the divisome complex and is recruited early to the Z-ring. Probably stimulates Z-ring formation, perhaps through the cross-linking of FtsZ protofilaments. Its function overlaps with FtsA. The sequence is that of Cell division protein SepF from Agathobacter rectalis (strain ATCC 33656 / DSM 3377 / JCM 17463 / KCTC 5835 / VPI 0990) (Eubacterium rectale).